A 546-amino-acid chain; its full sequence is Beta-amylase (546 aa).

The first 30 residues, 1 to 30, serve as a signal peptide directing secretion; it reads MKNQFQYCCIVILSVVMLFVSLLIPQASSA. A substrate-binding site is contributed by Asp-79. 3 residues coordinate Ca(2+): Glu-86, Asp-90, and Gln-91. His-119 and Asp-127 together coordinate substrate. Residues Cys-121 and Cys-129 are joined by a disulfide bond. Positions 171 and 174 each coordinate Ca(2+). The active-site Proton donor is Glu-202. Residues Lys-317, His-322, and Thr-360 each coordinate substrate. Glu-397 acts as the Proton acceptor in catalysis. Substrate contacts are provided by residues 398–399 and Arg-427; that span reads NA. The CBM20 domain maps to 444-546; sequence LLGVTPVMQT…LKTTSHTSSW (103 aa).

The protein belongs to the glycosyl hydrolase 14 family. In terms of assembly, monomer. Requires Ca(2+) as cofactor.

The catalysed reaction is Hydrolysis of (1-&gt;4)-alpha-D-glucosidic linkages in polysaccharides so as to remove successive maltose units from the non-reducing ends of the chains.. In Bacillus cereus, this protein is Beta-amylase (spoII).